A 142-amino-acid polypeptide reads, in one-letter code: Transcriptional regulator MraZ (142 aa).

2 consecutive SpoVT-AbrB domains span residues glutamate 5 to glutamate 48 and alanine 77 to threonine 120.

Belongs to the MraZ family. Forms oligomers.

Its subcellular location is the cytoplasm. The protein localises to the nucleoid. This chain is Transcriptional regulator MraZ, found in Dehalococcoides mccartyi (strain ATCC BAA-2266 / KCTC 15142 / 195) (Dehalococcoides ethenogenes (strain 195)).